The chain runs to 261 residues: Cytochrome c oxidase subunit 3 (261 aa).

Topologically, residues 1 to 15 (MTHQTHAYHMVNPSP) are mitochondrial matrix. The chain crosses the membrane as a helical span at residues 16 to 34 (WPLTGALSALLMTSGLIMW). At 35–40 (FHFNST) the chain is on the mitochondrial intermembrane side. The helical transmembrane segment at 41 to 66 (TLLMLGLTTNMLTMYQWWRDVIREST) threads the bilayer. The Mitochondrial matrix segment spans residues 67–72 (FQGHHT). A helical membrane pass occupies residues 73 to 105 (PNVQKGLRYGMILFIISEVLFFTGFFWAFYHSS). Topologically, residues 106-128 (LAPTPELGGCWPPTGIHPLNPLE) are mitochondrial intermembrane. Residues 129 to 152 (VPLLNTSVLLASGVSITWAHHSLM) traverse the membrane as a helical segment. The Mitochondrial matrix portion of the chain corresponds to 153 to 155 (EGN). The chain crosses the membrane as a helical span at residues 156-183 (RNHMLQALFITIALGVYFTLLQASEYYE). Topologically, residues 184 to 190 (APFTISD) are mitochondrial intermembrane. Residues 191-223 (GVYGSTFFVATGFHGLHVIIGSTFLIVCFFRQL) form a helical membrane-spanning segment. The Mitochondrial matrix portion of the chain corresponds to 224 to 232 (KFHFTSNHH). A helical membrane pass occupies residues 233-256 (FGFEAAAWYWHFVDVVWLFLYVSI). At 257–261 (YWWGS) the chain is on the mitochondrial intermembrane side.

This sequence belongs to the cytochrome c oxidase subunit 3 family. Component of the cytochrome c oxidase (complex IV, CIV), a multisubunit enzyme composed of 14 subunits. The complex is composed of a catalytic core of 3 subunits MT-CO1, MT-CO2 and MT-CO3, encoded in the mitochondrial DNA, and 11 supernumerary subunits COX4I, COX5A, COX5B, COX6A, COX6B, COX6C, COX7A, COX7B, COX7C, COX8 and NDUFA4, which are encoded in the nuclear genome. The complex exists as a monomer or a dimer and forms supercomplexes (SCs) in the inner mitochondrial membrane with NADH-ubiquinone oxidoreductase (complex I, CI) and ubiquinol-cytochrome c oxidoreductase (cytochrome b-c1 complex, complex III, CIII), resulting in different assemblies (supercomplex SCI(1)III(2)IV(1) and megacomplex MCI(2)III(2)IV(2)).

The protein localises to the mitochondrion inner membrane. It carries out the reaction 4 Fe(II)-[cytochrome c] + O2 + 8 H(+)(in) = 4 Fe(III)-[cytochrome c] + 2 H2O + 4 H(+)(out). In terms of biological role, component of the cytochrome c oxidase, the last enzyme in the mitochondrial electron transport chain which drives oxidative phosphorylation. The respiratory chain contains 3 multisubunit complexes succinate dehydrogenase (complex II, CII), ubiquinol-cytochrome c oxidoreductase (cytochrome b-c1 complex, complex III, CIII) and cytochrome c oxidase (complex IV, CIV), that cooperate to transfer electrons derived from NADH and succinate to molecular oxygen, creating an electrochemical gradient over the inner membrane that drives transmembrane transport and the ATP synthase. Cytochrome c oxidase is the component of the respiratory chain that catalyzes the reduction of oxygen to water. Electrons originating from reduced cytochrome c in the intermembrane space (IMS) are transferred via the dinuclear copper A center (CU(A)) of subunit 2 and heme A of subunit 1 to the active site in subunit 1, a binuclear center (BNC) formed by heme A3 and copper B (CU(B)). The BNC reduces molecular oxygen to 2 water molecules using 4 electrons from cytochrome c in the IMS and 4 protons from the mitochondrial matrix. This Antilope cervicapra (Blackbuck) protein is Cytochrome c oxidase subunit 3 (MT-CO3).